We begin with the raw amino-acid sequence, 261 residues long: Carnitinyl-CoA dehydratase (261 aa).

The Nucleophile role is filled by E111. E131 functions as the Proton acceptor in the catalytic mechanism.

Belongs to the enoyl-CoA hydratase/isomerase family.

The enzyme catalyses (R)-carnitinyl-CoA = crotonobetainyl-CoA + H2O. Its pathway is amine and polyamine metabolism; carnitine metabolism. Its function is as follows. Catalyzes the reversible dehydration of L-carnitinyl-CoA to crotonobetainyl-CoA. In Salmonella typhimurium (strain LT2 / SGSC1412 / ATCC 700720), this protein is Carnitinyl-CoA dehydratase.